The primary structure comprises 437 residues: UBX domain-containing protein 6 (437 aa).

Disordered stretches follow at residues M1–G45 and E89–R109. Over residues F7–K18 the composition is skewed to basic residues. Positions E179 to L251 constitute a PUB domain. The UBX domain maps to Y332–V409.

In terms of assembly, interacts with cdc-48.1 (via N-terminus) and cdc-48.2 (via N-terminus). Expressed in the pharynx and some head neurons.

Probably acts as an adapter for ATPase cdc-48.1 and/or cdc-48.2, conferring substrate specificity. Involved in the lysosomal clearance of cellular material in diet restricted conditions. In Caenorhabditis elegans, this protein is UBX domain-containing protein 6.